The sequence spans 109 residues: MSVKIRLSRGGAKKRPFYSIVVANSRAPRDGDFIEKVGTYNPMVPHDHPERVVLQEDRIKEWLAKGAQPTDRVARFLGKANLIPMPALRETPKKSAPKAKAQERAKAAG.

Positions 87–109 are disordered; that stretch reads ALRETPKKSAPKAKAQERAKAAG. The segment covering 100–109 has biased composition (basic and acidic residues); the sequence is KAQERAKAAG.

It belongs to the bacterial ribosomal protein bS16 family.

This is Small ribosomal subunit protein bS16 from Rhodospirillum centenum (strain ATCC 51521 / SW).